A 236-amino-acid polypeptide reads, in one-letter code: Putative (5-formylfuran-3-yl)methyl phosphate synthase (236 aa).

Residue Lys-38 is the Schiff-base intermediate with substrate of the active site. Catalysis depends on Lys-94, which acts as the Proton acceptor.

The protein belongs to the MfnB family.

It catalyses the reaction 2 D-glyceraldehyde 3-phosphate = 4-(hydroxymethyl)-2-furancarboxaldehyde phosphate + phosphate + 2 H2O. Catalyzes the formation of 4-(hydroxymethyl)-2-furancarboxaldehyde phosphate (4-HFC-P) from two molecules of glyceraldehyde-3-P (GA-3-P). The sequence is that of Putative (5-formylfuran-3-yl)methyl phosphate synthase from Methylorubrum extorquens (Methylobacterium dichloromethanicum).